The chain runs to 379 residues: Lactosylceramide 1,3-N-acetyl-beta-D-glucosaminyltransferase A (379 aa).

Topologically, residues 1-12 (MFMNCRRVKKWH) are cytoplasmic. A helical; Signal-anchor for type II membrane protein transmembrane segment spans residues 13–30 (FLQLLSMCCVMSVLMVCW). At 31-379 (EHVDHHVVSH…NTYSCMAAFT (349 aa)) the chain is on the lumenal side. 4 N-linked (GlcNAc...) asparagine glycosylation sites follow: Asn57, Asn113, Asn168, and Asn277.

Belongs to the glycosyltransferase 31 family.

The protein localises to the golgi apparatus membrane. It catalyses the reaction a beta-D-Gal-(1-&gt;4)-beta-D-Glc-(1&lt;-&gt;1)-Cer(d18:1(4E)) + UDP-N-acetyl-alpha-D-glucosamine = a beta-D-GlcNAc-(1-&gt;3)-beta-D-Gal-(1-&gt;4)-beta-D-Glc-(1&lt;-&gt;1)-Cer(d18:1(4E)) + UDP + H(+). It carries out the reaction a neolactoside nLc4Cer(d18:1(4E)) + UDP-N-acetyl-alpha-D-glucosamine = a neolactoside IV(3)-beta-GlcNAc-nLc4Cer(d18:1(4E)) + UDP + H(+). The protein operates within protein modification; protein glycosylation. In terms of biological role, beta-1,3-N-acetylglucosaminyltransferase that plays a key role in the synthesis of lacto- or neolacto-series carbohydrate chains on glycolipids. The chain is Lactosylceramide 1,3-N-acetyl-beta-D-glucosaminyltransferase A (b3gnt5a) from Danio rerio (Zebrafish).